The sequence spans 147 residues: F420H(2)-dependent reductase Rv1155 (147 aa).

Coenzyme F420-(gamma-Glu)n-binding positions include glutamine 32, glutamine 37, serine 50, alanine 56–asparagine 60, tryptophan 77–tyrosine 79, and histidine 138.

Belongs to the F420H(2)-dependent biliverdin reductase family. In terms of assembly, homodimer.

Its function is as follows. F420H(2)-dependent reductase able to catalyze the reduction of biliverdin-IXalpha to bilirubin-IXalpha in vitro. However, kinetic parameters show that it is less efficient than the biliverdin reductase Rv2074 and suggest biliverdin-IXalpha is unlikely to be the native substrate of Rv1155, which probably catalyzes the reduction of an alternative molecule in vivo. Binds coenzyme F420, but does not bind FMN or other flavins. Cannot use pyridoxine 5'-phosphate, pyridoxamine 5'-phosphate, pyridoxal 5'-phosphate (PLP), the anti-tuberculosis drug PA-824 or aflatoxin analogs as substrates. This Mycobacterium tuberculosis (strain ATCC 25618 / H37Rv) protein is F420H(2)-dependent reductase Rv1155.